The following is a 317-amino-acid chain: D-alanine--D-alanine ligase (317 aa).

In terms of domain architecture, ATP-grasp spans 103–299 (KHIFHSLNID…FNELVKIIVE (197 aa)). 130–183 (KVDYPYVLKPINEGSSIGVHMIFSHEDYLELKNNSSTIMEKMIIEEYIPGIELH) provides a ligand contact to ATP. 3 residues coordinate Mg(2+): Asp251, Glu265, and Asn267.

It belongs to the D-alanine--D-alanine ligase family. Mg(2+) is required as a cofactor. Mn(2+) serves as cofactor.

It localises to the cytoplasm. The catalysed reaction is 2 D-alanine + ATP = D-alanyl-D-alanine + ADP + phosphate + H(+). The protein operates within cell wall biogenesis; peptidoglycan biosynthesis. In terms of biological role, cell wall formation. The protein is D-alanine--D-alanine ligase of Wolbachia pipientis subsp. Culex pipiens (strain wPip).